Here is a 339-residue protein sequence, read N- to C-terminus: Histidine protein methyltransferase 1 (339 aa).

Phosphoserine is present on residues Ser-333 and Ser-338.

Belongs to the methyltransferase superfamily. METTL18 family.

It localises to the cytoplasm. The protein localises to the nucleus. It carries out the reaction L-histidyl-[protein] + S-adenosyl-L-methionine = N(tele)-methyl-L-histidyl-[protein] + S-adenosyl-L-homocysteine + H(+). In terms of biological role, protein-histidine N-methyltransferase that mediates methylation of target protein on His residues. In Schizosaccharomyces pombe (strain 972 / ATCC 24843) (Fission yeast), this protein is Histidine protein methyltransferase 1.